The primary structure comprises 344 residues: Phosphoribosylformylglycinamidine cyclo-ligase (344 aa).

It belongs to the AIR synthase family.

The protein localises to the cytoplasm. The enzyme catalyses 2-formamido-N(1)-(5-O-phospho-beta-D-ribosyl)acetamidine + ATP = 5-amino-1-(5-phospho-beta-D-ribosyl)imidazole + ADP + phosphate + H(+). It functions in the pathway purine metabolism; IMP biosynthesis via de novo pathway; 5-amino-1-(5-phospho-D-ribosyl)imidazole from N(2)-formyl-N(1)-(5-phospho-D-ribosyl)glycinamide: step 2/2. The chain is Phosphoribosylformylglycinamidine cyclo-ligase from Neisseria meningitidis serogroup C (strain 053442).